The sequence spans 60 residues: Cecropin-B (60 aa).

The N-terminal stretch at 1–25 is a signal peptide; the sequence is MNFTKLFILVAIAVLVVVGVQPVDG. Leu59 carries the post-translational modification Leucine amide.

This sequence belongs to the cecropin family.

The protein localises to the secreted. In terms of biological role, cecropins have lytic and antibacterial activity against several Gram-positive and Gram-negative bacteria. In Anopheles gambiae (African malaria mosquito), this protein is Cecropin-B (CecB).